A 624-amino-acid chain; its full sequence is Polycomb group protein EMF2A (624 aa).

The C2H2-type zinc finger occupies 338–359 (CPFCLVRCGNFKGLECHMTSSH). The disordered stretch occupies residues 420–445 (DAHIMESGSPEETQAESEDDVQEENE). Residues 432–445 (TQAESEDDVQEENE) are compositionally biased toward acidic residues. Residues 474 to 609 (LSANRADPRN…SARTMDTCNR (136 aa)) are VEFS-box.

It belongs to the VEFS (VRN2-EMF2-FIS2-SU(Z)12) family. In terms of assembly, component of the polycomb repressive complex 2 (PRC2), which methylates 'Lys-27' residues of histone H3 (H3K27me3), leading to transcriptional repression of the affected target gene. Widely expressed. Highly expressed in shoot apical meristem and inflorescence meristem. Expressed in roots, leaves and immature seeds.

Functionally, polycomb group (PcG) protein. PcG proteins act by forming multiprotein complexes, which are required to maintain the transcriptionally repressive state of homeotic genes throughout development. PcG proteins are not required to initiate repression, but to maintain it during later stages of development. They act via the methylation of histones, rendering chromatin heritably changed in its expressibility. This Oryza sativa subsp. japonica (Rice) protein is Polycomb group protein EMF2A.